The sequence spans 1038 residues: GTPase-activating Rap/Ran-GAP domain-like protein 3 (1038 aa).

Residues lysine 6 and serine 68 each carry the phosphoserine modification. The region spanning 214-430 is the Rap-GAP domain; sequence LLVLEEQEGS…RTLDMLIRSL (217 aa). Phosphoserine occurs at positions 449 and 455. One can recognise a CNH domain in the interval 512–824; that stretch reads PHEAVCADPW…QLVASRSDIY (313 aa). 2 disordered regions span residues 833 to 863 and 937 to 1038; these read EGSSGGSSKGASAHTSPQTPPARDTPLFPSS and LLGL…IDLK. At threonine 851 the chain carries Phosphothreonine. Positions 1019–1028 are enriched in polar residues; that stretch reads SGSSPFQLMA.

Belongs to the GARNL3 family.

This Mus musculus (Mouse) protein is GTPase-activating Rap/Ran-GAP domain-like protein 3 (Garnl3).